A 273-amino-acid chain; its full sequence is Gamma-glutamyl cyclotransferase gliK (273 aa).

A helical transmembrane segment spans residues Trp-227–His-243.

The protein belongs to the class-I pyridoxal-phosphate-dependent aminotransferase family.

Its subcellular location is the membrane. It carries out the reaction an alpha-(gamma-L-glutamyl)-L-amino acid = 5-oxo-L-proline + an L-alpha-amino acid. It functions in the pathway mycotoxin biosynthesis. Functionally, gamma-glutamyl cyclotransferase-like protein; part of the gene cluster that mediates the biosynthesis of gliotoxin, a member of the epipolythiodioxopiperazine (ETP) class of toxins characterized by a disulfide bridged cyclic dipeptide. The first step in gliotoxin biosynthesis is the condensation of serine and phenylalanine to form the cyclo-L-phenylalanyl-L-serine diketopiperazine (DKP) by the NRPS gliP. GliP is also able to produce the DKP cyclo-L-tryptophanyl-L-serine, suggesting that the substrate specificity of the first adenylation (A) domain in gliP is sufficiently relaxed to accommodate both L-Phe and L-Trp. The cytochrome P450 monooxygenase gliC has been shown to catalyze the subsequent hydroxylation of the alpha-carbon of L-Phe in cyclo-L-phenylalanyl-L-serine whereas the second cytochrome P450 enzyme, gliF, is presumably involved in the modification of the DKP side chain. The glutathione S-transferase (GST) gliG then forms a bis-glutathionylated biosynthetic intermediate which is responsible for the sulfurization of gliotoxin. This bis-glutathionylated intermediate is subsequently processed by the gamma-glutamyl cyclotransferase gliK to remove both gamma-glutamyl moieties. Subsequent processing via gliI yields a biosynthetic intermediate, which is N-methylated via the N-methyltransferase gliN, before the gliotoxin oxidoreductase gliT-mediated disulfide bridge closure. GliN-mediated amide methylation confers stability to ETP, damping the spontaneous formation of tri- and tetrasulfides. Intracellular dithiol gliotoxin oxidized by gliT is subsequently effluxed by gliA. Gliotoxin contributes to pathogenesis during invasive aspergillosis. In macrophages and neutrophils, gliotoxin showed inhibition of various different cell functions including cytokine production, antigen presentation, phagocytosis, and production of reactive oxygen species. This is Gamma-glutamyl cyclotransferase gliK from Aspergillus fumigatus (strain ATCC MYA-4609 / CBS 101355 / FGSC A1100 / Af293) (Neosartorya fumigata).